The following is a 1072-amino-acid chain: DNA-directed RNA polymerase subunit beta (1072 aa).

This sequence belongs to the RNA polymerase beta chain family. In plastids the minimal PEP RNA polymerase catalytic core is composed of four subunits: alpha, beta, beta', and beta''. When a (nuclear-encoded) sigma factor is associated with the core the holoenzyme is formed, which can initiate transcription.

Its subcellular location is the plastid. It localises to the chloroplast. It catalyses the reaction RNA(n) + a ribonucleoside 5'-triphosphate = RNA(n+1) + diphosphate. In terms of biological role, DNA-dependent RNA polymerase catalyzes the transcription of DNA into RNA using the four ribonucleoside triphosphates as substrates. The protein is DNA-directed RNA polymerase subunit beta of Lemna minor (Common duckweed).